We begin with the raw amino-acid sequence, 176 residues long: Tubulin polymerization-promoting protein family member 3 (176 aa).

Residue Ala2 is modified to N-acetylalanine.

This sequence belongs to the TPPP family.

It is found in the cytoplasm. The protein localises to the cytoskeleton. Functionally, regulator of microtubule dynamic that has microtubule bundling activity. Required for embryo implantation; possibly by regulating beta-catenin. Also required for decidualization via regulation of beta-catenin. The protein is Tubulin polymerization-promoting protein family member 3 (TPPP3) of Bos taurus (Bovine).